A 246-amino-acid polypeptide reads, in one-letter code: Probable phosphatase ASA_1316 (246 aa).

Zn(2+) contacts are provided by H8, H10, H16, H41, E74, H102, H132, D193, and H195.

The protein belongs to the PHP family. Requires Zn(2+) as cofactor.

The protein is Probable phosphatase ASA_1316 of Aeromonas salmonicida (strain A449).